The sequence spans 423 residues: MSEDKDYMSEPFIVKKIDDEESLLDDYNPQGNTSFSKTCFHGINALSGVGILSVPYALASGGWLSLIILFTVAITTFYCAILIKRCMEMDPLLRSYPDIGYKAFGNTGRVIVSIFMNLELYLVATSFLILEGDNLNKLFSNVGLNFMGLEFQGKQMFIIMVALIILPSVWLDNMRILSYVSASGVFASGVILASIFSVGAFEGVGFKNNDSEVFRLNGVATSVSLYAFCYCAHPVFPTLYTSMKNKRQFSNVMIICFTICTFIYASVAVLGYLMYGSDVESQITLNLPTDKLSSKVAIWTTLVNPIAKFALMVTPIIDAMRSRFSRVLPNKRASGFLLSTILVTSNVIVALLLPFFGDLMSLVGAFLSASASVILPCLCYLKISGKYQRLGFETLVLIGITLTGIVVVITGTYQAVKDIFGRF.

11 helical membrane-spanning segments follow: residues 39–59 (CFHG…YALA), 63–83 (WLSL…AILI), 110–130 (VIVS…FLIL), 151–171 (FQGK…SVWL), 186–206 (FASG…GVGF), 219–239 (VATS…FPTL), 252–272 (VMII…VLGY), 297–317 (AIWT…TPII), 333–355 (ASGF…LLPF), 359–381 (LMSL…LCYL), and 390–410 (LGFE…VVIT).

Belongs to the amino acid/polyamine transporter 2 family. Amino acid/auxin permease (AAAP) (TC 2.A.18.5) subfamily.

Its subcellular location is the membrane. The sequence is that of Amino acid transporter AVT1J from Arabidopsis thaliana (Mouse-ear cress).